The primary structure comprises 914 residues: Probable dipeptidyl-aminopeptidase B (914 aa).

The disordered stretch occupies residues 1 to 82 (MGAEKRINDE…GLPPPSGAQR (82 aa)). The Cytoplasmic portion of the chain corresponds to 1–88 (MGAEKRINDE…GAQRTPKKVS (88 aa)). Residues 26–38 (DSTSTASISLALI) show a composition bias toward low complexity. Residues 89-109 (IIFWLVAALCVGGWLVAFFVF) form a helical; Signal-anchor for type II membrane protein membrane-spanning segment. Residues 110-914 (MGSPKKDSDK…RSLLKRMSNA (805 aa)) are Vacuolar-facing. N-linked (GlcNAc...) asparagine glycans are attached at residues Asn128, Asn295, Asn347, and Asn617. Ser751 (charge relay system) is an active-site residue. Asn810 carries N-linked (GlcNAc...) asparagine glycosylation. Active-site charge relay system residues include Asp828 and His861. A glycan (N-linked (GlcNAc...) asparagine) is linked at Asn897.

This sequence belongs to the peptidase S9B family.

It localises to the vacuole membrane. The enzyme catalyses Release of an N-terminal dipeptide, Xaa-Yaa-|-Zaa-, from a polypeptide, preferentially when Yaa is Pro, provided Zaa is neither Pro nor hydroxyproline.. In terms of biological role, type IV dipeptidyl-peptidase which removes N-terminal dipeptides sequentially from polypeptides having unsubstituted N-termini provided that the penultimate residue is proline. This chain is Probable dipeptidyl-aminopeptidase B (DAPB), found in Uncinocarpus reesii (strain UAMH 1704).